We begin with the raw amino-acid sequence, 721 residues long: Homeobox-leucine zipper protein HDG2 (721 aa).

The disordered stretch occupies residues 17–70 (NNHNYNHEDNNNEGFLRDDEFDSPNTKSGSENQEGGSGNDQDPLHPNKKKRYHR). Residues 21-34 (YNHEDNNNEGFLRD) are compositionally biased toward basic and acidic residues. The homeobox DNA-binding region spans 64–123 (KKKRYHRHTQLQIQEMEAFFKECPHPDDKQRKQLSRELNLEPLQVKFWFQNKRTQMKNHH). Residues 120–194 (KNHHERHENS…DRISAIAAKY (75 aa)) adopt a coiled-coil conformation. Positions 242-468 (TESDKPVIID…LDRQCERLAS (227 aa)) constitute an START domain.

The protein belongs to the HD-ZIP homeobox family. Class IV subfamily. Interacts with AIL7/PLT7, ANT, BBM and AIL1. As to expression, expressed in hairless cell files of the hypocotyl epidermis. Expressed in shoot apical meristem (SAM) with higher levels in L1 cells and the epidermal layer of young leaves. Expressed in primary root tips, in the L1 of apical inflorescence meristems, early flower primordia, carpel epidermis, ovule primordia, nucellus, chalaze and seed coat.

The protein resides in the nucleus. Functionally, probable transcription factor. Involved, together with PDF2, in the regulation of flower organs development by promoting the expression of APETALA 3 (AP3) in the epidermis and internal cell layers of developing flowers. This Arabidopsis thaliana (Mouse-ear cress) protein is Homeobox-leucine zipper protein HDG2.